The primary structure comprises 153 residues: Gastric inhibitory polypeptide (153 aa).

Residues 1–21 form the signal peptide; that stretch reads MVATKTFALLLLSLFLAVGLG. Propeptides lie at residues 22 to 50 and 95 to 153; these read EKKE…PRGP and EARA…LRSR. A disordered region spans residues 102-125; sequence ASQANRKEEEAVEPQSSPAKNPSD.

This sequence belongs to the glucagon family.

Its subcellular location is the secreted. Functionally, potent stimulator of insulin secretion and relatively poor inhibitor of gastric acid secretion. This chain is Gastric inhibitory polypeptide (GIP), found in Homo sapiens (Human).